The following is a 275-amino-acid chain: Large ribosomal subunit protein uL2 (275 aa).

The interval 208–275 is disordered; that stretch reads AGAKRWRGRR…NMIIRDRRKK (68 aa). Basic residues-rich tracts occupy residues 209–219 and 254–263; these read GAKRWRGRRPT and KGYKTRRNKR.

It belongs to the universal ribosomal protein uL2 family. In terms of assembly, part of the 50S ribosomal subunit. Forms a bridge to the 30S subunit in the 70S ribosome.

One of the primary rRNA binding proteins. Required for association of the 30S and 50S subunits to form the 70S ribosome, for tRNA binding and peptide bond formation. It has been suggested to have peptidyltransferase activity; this is somewhat controversial. Makes several contacts with the 16S rRNA in the 70S ribosome. This is Large ribosomal subunit protein uL2 from Coxiella burnetii (strain CbuG_Q212) (Coxiella burnetii (strain Q212)).